The chain runs to 330 residues: GMP reductase (330 aa).

C180 functions as the Thioimidate intermediate in the catalytic mechanism. L209 to V232 provides a ligand contact to NADP(+).

Belongs to the IMPDH/GMPR family. GuaC type 2 subfamily.

It catalyses the reaction IMP + NH4(+) + NADP(+) = GMP + NADPH + 2 H(+). In terms of biological role, catalyzes the irreversible NADPH-dependent deamination of GMP to IMP. It functions in the conversion of nucleobase, nucleoside and nucleotide derivatives of G to A nucleotides, and in maintaining the intracellular balance of A and G nucleotides. The chain is GMP reductase from Lactobacillus acidophilus (strain ATCC 700396 / NCK56 / N2 / NCFM).